The sequence spans 216 residues: MOB kinase activator 1A (216 aa).

Ser2 carries the N-acetylserine modification. 2 positions are modified to phosphothreonine: Thr12 and Thr35. Thr74 carries the phosphothreonine; by STK3/MST2 modification. Positions 79, 84, 161, and 166 each coordinate Zn(2+). Thr181 is subject to Phosphothreonine.

The protein belongs to the MOB1/phocein family. Binds STK38 and STK38L. Interacts with LATS1 and LATS2. Forms a tripartite complex with STK38 and STK3/MST2. Phosphorylated by STK3/MST2 and STK4/MST1 and this phosphorylation enhances its binding to LATS1. Adrenal gland, bone marrow, brain, placenta, prostate, salivary gland, skeletal muscle, testis, thymus, thyroid gland, heart, spinal cord, fetal brain and fetal liver.

Functionally, activator of LATS1/2 in the Hippo signaling pathway which plays a pivotal role in organ size control and tumor suppression by restricting proliferation and promoting apoptosis. The core of this pathway is composed of a kinase cascade wherein STK3/MST2 and STK4/MST1, in complex with its regulatory protein SAV1, phosphorylates and activates LATS1/2 in complex with its regulatory protein MOB1, which in turn phosphorylates and inactivates YAP1 oncoprotein and WWTR1/TAZ. Phosphorylation of YAP1 by LATS1/2 inhibits its translocation into the nucleus to regulate cellular genes important for cell proliferation, cell death, and cell migration. Stimulates the kinase activity of STK38 and STK38L. Acts cooperatively with STK3/MST2 to activate STK38. The polypeptide is MOB kinase activator 1A (Homo sapiens (Human)).